Here is a 172-residue protein sequence, read N- to C-terminus: L-methionine sulfoximine/L-methionine sulfone acetyltransferase (172 aa).

Residues Ala-3–Asp-166 form the N-acetyltransferase domain. Substrate contacts are provided by residues Arg-75 to Phe-77 and Glu-85 to Ser-87. Residues Val-88–Val-90, Gly-96–Val-101, and Asn-127 contribute to the acetyl-CoA site.

As to quaternary structure, homodimer.

The catalysed reaction is L-methionine sulfoximine + acetyl-CoA = N-acetyl-L-methionine sulfoximine + CoA + H(+). It carries out the reaction L-methionine sulfone + acetyl-CoA = N-acetyl-L-methionine sulfone + CoA + H(+). In terms of biological role, plays a role in the resistance against the toxic effects of L-methionine sulfoximine (MSX), a rare amino acid, which inhibits glutamine synthetase (GlnA). Catalyzes the acetylation of L-methionine sulfoximine (MSX). This Pseudomonas aeruginosa (strain ATCC 15692 / DSM 22644 / CIP 104116 / JCM 14847 / LMG 12228 / 1C / PRS 101 / PAO1) protein is L-methionine sulfoximine/L-methionine sulfone acetyltransferase.